Reading from the N-terminus, the 434-residue chain is Methylenetetrahydrofolate--tRNA-(uracil-5-)-methyltransferase TrmFO (434 aa).

FAD is bound at residue 9 to 14 (GGGLAG).

This sequence belongs to the MnmG family. TrmFO subfamily. It depends on FAD as a cofactor.

The protein localises to the cytoplasm. It catalyses the reaction uridine(54) in tRNA + (6R)-5,10-methylene-5,6,7,8-tetrahydrofolate + NADH + H(+) = 5-methyluridine(54) in tRNA + (6S)-5,6,7,8-tetrahydrofolate + NAD(+). The catalysed reaction is uridine(54) in tRNA + (6R)-5,10-methylene-5,6,7,8-tetrahydrofolate + NADPH + H(+) = 5-methyluridine(54) in tRNA + (6S)-5,6,7,8-tetrahydrofolate + NADP(+). Catalyzes the folate-dependent formation of 5-methyl-uridine at position 54 (M-5-U54) in all tRNAs. The sequence is that of Methylenetetrahydrofolate--tRNA-(uracil-5-)-methyltransferase TrmFO from Geobacter sulfurreducens (strain ATCC 51573 / DSM 12127 / PCA).